The chain runs to 84 residues: Replication regulatory protein repA2 (84 aa).

Residues 1 to 13 show a composition bias toward polar residues; sequence MSQTENAVTSSSG. The interval 1 to 31 is disordered; the sequence is MSQTENAVTSSSGAKRAYRKGNPLSDAEKQR.

Its function is as follows. This protein is involved in the determination of copy number in gene replication. It binds to the repA promoter thus inhibiting the synthesis of the mRNA for the initiator protein repA. The protein is Replication regulatory protein repA2 (repA2) of Escherichia coli O157:H7.